The following is a 281-amino-acid chain: NADPH-dependent 7-cyano-7-deazaguanine reductase (281 aa).

81-83 is a binding site for substrate; sequence IES. 83 to 84 serves as a coordination point for NADPH; it reads SK. Cys-188 (thioimide intermediate) is an active-site residue. Asp-195 (proton donor) is an active-site residue. Position 227–228 (227–228) interacts with substrate; it reads HE. 256 to 257 contacts NADPH; the sequence is RG.

It belongs to the GTP cyclohydrolase I family. QueF type 2 subfamily. Homodimer.

Its subcellular location is the cytoplasm. It carries out the reaction 7-aminomethyl-7-carbaguanine + 2 NADP(+) = 7-cyano-7-deazaguanine + 2 NADPH + 3 H(+). The protein operates within tRNA modification; tRNA-queuosine biosynthesis. Catalyzes the NADPH-dependent reduction of 7-cyano-7-deazaguanine (preQ0) to 7-aminomethyl-7-deazaguanine (preQ1). The chain is NADPH-dependent 7-cyano-7-deazaguanine reductase from Paracidovorax citrulli (strain AAC00-1) (Acidovorax citrulli).